The sequence spans 288 residues: MSNLKQLRTRIKSVKSTQKITKAMQLVSASKMTKIKTQIANSNFYIEAINKMMSNIFSMTLCELSIEEQKFFNTMPSKANLLIVMTSERGLCGMFNYSIIKQVKNDIKELANKGEQIKLIIIGKKGYEVLKRQYANYIDSYFEFPKSHYANLILQLKEKIMYAVENLEISNCIIYFNKFKNAMTQILTKQKILPIEKHRDYSVVENYHFEYEGKNLISNLINLYLYAKINYALLQNIVSEEGARMTAMDSATNNANDLISKLVLKLNRSRQTIITTELIEIIAGAEAV.

It belongs to the ATPase gamma chain family. In terms of assembly, F-type ATPases have 2 components, CF(1) - the catalytic core - and CF(0) - the membrane proton channel. CF(1) has five subunits: alpha(3), beta(3), gamma(1), delta(1), epsilon(1). CF(0) has three main subunits: a, b and c.

Its subcellular location is the cell inner membrane. In terms of biological role, produces ATP from ADP in the presence of a proton gradient across the membrane. The gamma chain is believed to be important in regulating ATPase activity and the flow of protons through the CF(0) complex. The polypeptide is ATP synthase gamma chain (Rickettsia typhi (strain ATCC VR-144 / Wilmington)).